A 346-amino-acid chain; its full sequence is Dihydroorotase (346 aa).

Zn(2+) contacts are provided by H14 and H16. Residues 16-18 (HLR) and N42 contribute to the substrate site. Zn(2+) contacts are provided by K100, H137, and H175. Residue K100 is modified to N6-carboxylysine. H137 is a binding site for substrate. Position 220 (L220) interacts with substrate. D248 is a Zn(2+) binding site. D248 is a catalytic residue. H252 and A264 together coordinate substrate.

It belongs to the metallo-dependent hydrolases superfamily. DHOase family. Class II DHOase subfamily. Homodimer. Zn(2+) is required as a cofactor.

The catalysed reaction is (S)-dihydroorotate + H2O = N-carbamoyl-L-aspartate + H(+). It functions in the pathway pyrimidine metabolism; UMP biosynthesis via de novo pathway; (S)-dihydroorotate from bicarbonate: step 3/3. Functionally, catalyzes the reversible cyclization of carbamoyl aspartate to dihydroorotate. This Ruegeria sp. (strain TM1040) (Silicibacter sp.) protein is Dihydroorotase.